We begin with the raw amino-acid sequence, 200 residues long: Late embryogenesis abundant protein 19 (200 aa).

Disordered stretches follow at residues 1-145 (MASH…KTGS) and 172-200 (TEDE…ARDH). Basic and acidic residues-rich tracts occupy residues 13-23 (GETKAHTEEKA), 30-42 (SKDK…DRAS), 53-81 (QDTK…KDKT), 88-97 (ARDKAAESKD), and 105-114 (EKTEQAKQKA). Positions 52-81 (GQDTKEATKEKAQAAKERASETAQAAKDKT) form a coiled coil. Low complexity-rich tracts occupy residues 115–130 (AETA…ETAQ) and 186–200 (TSAT…ARDH).

Belongs to the LEA type 4 family.

In terms of biological role, involved in response to stress. This Oryza sativa subsp. japonica (Rice) protein is Late embryogenesis abundant protein 19.